The chain runs to 432 residues: Anaerobic glycerol-3-phosphate dehydrogenase subunit B (432 aa).

It belongs to the anaerobic G-3-P dehydrogenase subunit B family. Composed of a catalytic GlpA/B dimer and of membrane bound GlpC. It depends on FMN as a cofactor.

It catalyses the reaction a quinone + sn-glycerol 3-phosphate = dihydroxyacetone phosphate + a quinol. Its pathway is polyol metabolism; glycerol degradation via glycerol kinase pathway; glycerone phosphate from sn-glycerol 3-phosphate (anaerobic route): step 1/1. Functionally, conversion of glycerol 3-phosphate to dihydroxyacetone. Uses fumarate or nitrate as electron acceptor. This is Anaerobic glycerol-3-phosphate dehydrogenase subunit B from Haemophilus influenzae (strain PittGG).